The sequence spans 272 residues: Adenylate kinase (272 aa).

55 to 60 is a binding site for ATP; the sequence is GAGKGT. The tract at residues 75–104 is NMP; the sequence is ATGDMLRSQVAKKTPLGKEAKKIMDQGGLV. AMP-binding positions include threonine 76, arginine 81, 102–104, 131–134, and glutamine 138; these read GLV and GFPR. An LID region spans residues 172–209; the sequence is GRLVHPASGRSYHKIFNPPKQDMKDDITGEPLIQRSDD. ATP contacts are provided by residues arginine 173 and 182-183; that span reads SY. 2 residues coordinate AMP: arginine 206 and arginine 217. Position 245 (glutamine 245) interacts with ATP.

The protein belongs to the adenylate kinase family. AK2 subfamily. Monomer.

The protein localises to the cytoplasm. The protein resides in the cytosol. Its subcellular location is the mitochondrion intermembrane space. The enzyme catalyses AMP + ATP = 2 ADP. Catalyzes the reversible transfer of the terminal phosphate group between ATP and AMP. Plays an important role in cellular energy homeostasis and in adenine nucleotide metabolism. Adenylate kinase activity is critical for regulation of the phosphate utilization and the AMP de novo biosynthesis pathways. In Talaromyces marneffei (Penicillium marneffei), this protein is Adenylate kinase (adk1).